Reading from the N-terminus, the 97-residue chain is UPF0729 protein AAEL015238 (97 aa).

The segment at 69–97 (EVAASGSGSNGTATAVGSEGEAEETKKSQ) is disordered. The span at 74 to 83 (GSGSNGTATA) shows a compositional bias: polar residues.

The protein belongs to the UPF0729 family.

This is UPF0729 protein AAEL015238 from Aedes aegypti (Yellowfever mosquito).